The following is a 534-amino-acid chain: Unguisins hydrolase ungD' (534 aa).

It belongs to the peptidase S12 family.

The protein operates within secondary metabolite biosynthesis. Its function is as follows. Hydrolase; part of the gene cluster that mediates the biosynthesis of the unguisins, gamma-aminobutyric acid (GABA)-containing fungal cyclic heptapeptides with the amino acid sequence cyclo-(D-Ala1-D-Val2-L-Leu3-beta-MePhe4-D-Ala5-D-Trp6-GABA7) for unguisin H and cyclo-(D-Ala1-D-Ala2-L-Leu3-beta-MePhe4-D-Ala5-D-Trp6-GABA7) for unguisin I. Within the pathway, the hydrolase ungD' catalyzes the hydrolysis between the D-tryptophan and GABA residues of unguisins H and I to produce the corresponding linear peptides. The alanine racemase ungC' catalyzes the interconversion of L-alanine and D-alanine, providing the D-alanine which is accepted by the first adenylation domain of the nonribosomal peptide synthetase (NRPS) ungA', whereas the methyltransferase ungE' provides the (2R,3R)-beta-methylphenylalanine residue incorporated by the module 4. UngA' is the main enzyme within the cluster which condenses the 7 residues using its respective 7 modules. The terminal condensation domain (Ct) is involved in cyclization with D-alanine and thereby releasing of unguisins H and I. The sequence is that of Unguisins hydrolase ungD' from Aspergillus campestris (strain IBT 28561).